Consider the following 475-residue polypeptide: Stromelysin-1 (475 aa).

The first 17 residues, 1–17 (MKGLPVLLWLCTAVCSS), serve as a signal peptide directing secretion. The propeptide at 18–97 (YPLHGSEEDA…PRCGVPDVGG (80 aa)) is activation peptide. The short motif at 88-95 (PRCGVPDV) is the Cysteine switch element. Cysteine 90 lines the Zn(2+) pocket. Residue asparagine 118 is glycosylated (N-linked (GlcNAc...) asparagine). Ca(2+) contacts are provided by aspartate 122 and aspartate 156. 2 residues coordinate Zn(2+): histidine 166 and aspartate 168. Aspartate 173, glycine 174, glycine 176, and valine 178 together coordinate Ca(2+). Position 181 (histidine 181) interacts with Zn(2+). Ca(2+) is bound by residues glycine 188, asparagine 190, and aspartate 192. Residue histidine 194 participates in Zn(2+) binding. Residues aspartate 196, aspartate 197, and glutamate 199 each coordinate Ca(2+). Residue histidine 216 coordinates Zn(2+). Glutamate 217 is an active-site residue. Zn(2+)-binding residues include histidine 220 and histidine 226. Hemopexin repeat units lie at residues 285 to 334 (LPMC…WPSL), 335 to 381 (PSNM…GLPE), 383 to 431 (VQKI…FPGI), and 432 to 475 (GTKV…WFNC). Residues cysteine 288 and cysteine 475 are joined by a disulfide bond. Residue aspartate 295 participates in Ca(2+) binding. Ca(2+) contacts are provided by aspartate 387 and aspartate 436.

This sequence belongs to the peptidase M10A family. It depends on Ca(2+) as a cofactor. Requires Zn(2+) as cofactor.

Its subcellular location is the secreted. The protein resides in the extracellular space. The protein localises to the extracellular matrix. It carries out the reaction Preferential cleavage where P1', P2' and P3' are hydrophobic residues.. Its activity is regulated as follows. Inhibited by a synthetic peptide corresponding to the inhibitory cysteine switch motif. Inhibited by ethylenediaminetetraacetic acid (EDTA), 1,10-pheanthroline, 2-mecaptoethanol, dithiothreitol and metalloproteinase inhibitor protein TIMP. Its function is as follows. Can degrade fibronectin, laminin, gelatins of type I, III, IV, and V; collagens III, IV, X, and IX, and cartilage proteoglycans. Activates procollagenase. In terms of biological role, metalloproteinase with a rather broad substrate specificity that can degrade fibronectin, laminin, gelatins of type I, III, IV, and V; collagens III, IV, X, and IX, and cartilage proteoglycans. Activates different molecules including growth factors, plasminogen or other matrix metalloproteinases such as MMP9. Once released into the extracellular matrix (ECM), the inactive pro-enzyme is activated by the plasmin cascade signaling pathway. Also acts intracellularly. For example, in dopaminergic neurons, gets activated by the serine protease HTRA2 upon stress and plays a pivotal role in DA neuronal degeneration by mediating microglial activation and alpha-synuclein/SNCA cleavage. In addition, plays a role in immune response and possesses antiviral activity against various viruses. Mechanistically, translocates from the cytoplasm into the cell nucleus upon virus infection to influence NF-kappa-B activities. The chain is Stromelysin-1 (Mmp3) from Rattus norvegicus (Rat).